The sequence spans 158 residues: Ribosome maturation factor RimP (158 aa).

The protein belongs to the RimP family.

The protein resides in the cytoplasm. Its function is as follows. Required for maturation of 30S ribosomal subunits. The chain is Ribosome maturation factor RimP from Pediococcus pentosaceus (strain ATCC 25745 / CCUG 21536 / LMG 10740 / 183-1w).